The sequence spans 78 residues: D-alanyl carrier protein (78 aa).

One can recognise a Carrier domain in the interval 1-78 (MEFREQVLDL…KIVEVLEELR (78 aa)). Ser36 carries the post-translational modification O-(pantetheine 4'-phosphoryl)serine.

The protein belongs to the DltC family. In terms of processing, 4'-phosphopantetheine is transferred from CoA to a specific serine of apo-DCP.

The protein resides in the cytoplasm. It participates in cell wall biogenesis; lipoteichoic acid biosynthesis. Functionally, carrier protein involved in the D-alanylation of lipoteichoic acid (LTA). The loading of thioester-linked D-alanine onto DltC is catalyzed by D-alanine--D-alanyl carrier protein ligase DltA. The DltC-carried D-alanyl group is further transferred to cell membrane phosphatidylglycerol (PG) by forming an ester bond, probably catalyzed by DltD. D-alanylation of LTA plays an important role in modulating the properties of the cell wall in Gram-positive bacteria, influencing the net charge of the cell wall. This is D-alanyl carrier protein from Staphylococcus xylosus.